A 150-amino-acid chain; its full sequence is Cytochrome c oxidase subunit 5A, mitochondrial (150 aa).

The transit peptide at 1–41 (MLGAALRRCAVAATTRAGPRGLLHSARTPGPAAAIQSVRCX) directs the protein to the mitochondrion. Residues 2-17 (LGAALRRCAVAATTRA) carry the SIFI-degron motif. 2 positions are modified to N6-acetyllysine: lysine 87 and lysine 113. Threonine 141 carries the post-translational modification Phosphothreonine.

Belongs to the cytochrome c oxidase subunit 5A family. Component of the cytochrome c oxidase (complex IV, CIV), a multisubunit enzyme composed of 14 subunits. The complex is composed of a catalytic core of 3 subunits MT-CO1, MT-CO2 and MT-CO3, encoded in the mitochondrial DNA, and 11 supernumerary subunits COX4I, COX5A, COX5B, COX6A, COX6B, COX6C, COX7A, COX7B, COX7C, COX8 and NDUFA4, which are encoded in the nuclear genome. The complex exists as a monomer or a dimer and forms supercomplexes (SCs) in the inner mitochondrial membrane with NADH-ubiquinone oxidoreductase (complex I, CI) and ubiquinol-cytochrome c oxidoreductase (cytochrome b-c1 complex, complex III, CIII), resulting in different assemblies (supercomplex SCI(1)III(2)IV(1) and megacomplex MCI(2)III(2)IV(2)). Interacts with AFG1L. Interacts with RAB5IF. In response to mitochondrial stress, the precursor protein is ubiquitinated by the SIFI complex in the cytoplasm before mitochondrial import, leading to its degradation. Within the SIFI complex, UBR4 initiates ubiquitin chain that are further elongated or branched by KCMF1.

It localises to the mitochondrion inner membrane. It participates in energy metabolism; oxidative phosphorylation. Functionally, component of the cytochrome c oxidase, the last enzyme in the mitochondrial electron transport chain which drives oxidative phosphorylation. The respiratory chain contains 3 multisubunit complexes succinate dehydrogenase (complex II, CII), ubiquinol-cytochrome c oxidoreductase (cytochrome b-c1 complex, complex III, CIII) and cytochrome c oxidase (complex IV, CIV), that cooperate to transfer electrons derived from NADH and succinate to molecular oxygen, creating an electrochemical gradient over the inner membrane that drives transmembrane transport and the ATP synthase. Cytochrome c oxidase is the component of the respiratory chain that catalyzes the reduction of oxygen to water. Electrons originating from reduced cytochrome c in the intermembrane space (IMS) are transferred via the dinuclear copper A center (CU(A)) of subunit 2 and heme A of subunit 1 to the active site in subunit 1, a binuclear center (BNC) formed by heme A3 and copper B (CU(B)). The BNC reduces molecular oxygen to 2 water molecules using 4 electrons from cytochrome c in the IMS and 4 protons from the mitochondrial matrix. In Pan paniscus (Pygmy chimpanzee), this protein is Cytochrome c oxidase subunit 5A, mitochondrial (COX5A).